A 339-amino-acid chain; its full sequence is Heat-inducible transcription repressor HrcA (339 aa).

The protein belongs to the HrcA family.

Negative regulator of class I heat shock genes (grpE-dnaK-dnaJ and groELS operons). Prevents heat-shock induction of these operons. This is Heat-inducible transcription repressor HrcA from Leifsonia xyli subsp. xyli (strain CTCB07).